A 924-amino-acid polypeptide reads, in one-letter code: Exocyst complex component 2 (924 aa).

The region spanning 8–93 (PLVTGISPNE…GTSTVSFKLL (86 aa)) is the IPT/TIG domain. The stretch at 240-260 (QKLENVLNRASNTADTLFQEV) forms a coiled coil. Residues Ser-431, Ser-432, and Ser-435 each carry the phosphoserine modification. Thr-440 is modified (phosphothreonine). Lys-454 is subject to N6-acetyllysine. Ser-888 carries the post-translational modification Phosphoserine.

This sequence belongs to the SEC5 family. As to quaternary structure, the exocyst complex is composed of EXOC1, EXOC2, EXOC3, EXOC4, EXOC5, EXOC6, EXOC7 and EXOC8. Interacts with EXOC3L1. Interacts with GNEFR/DELGEF; this interaction occurs only in the presence of magnesium or manganese and is stimulated by dCTP or GTP. Interacts with RALA and RALB. Interacts with ARL13B; regulates ARL13B localization to the cilium membrane. Widely expressed with highest levels in brain and placenta.

It is found in the midbody. Its subcellular location is the midbody ring. Component of the exocyst complex involved in the docking of exocytic vesicles with fusion sites on the plasma membrane. In Homo sapiens (Human), this protein is Exocyst complex component 2 (EXOC2).